We begin with the raw amino-acid sequence, 708 residues long: Elongation factor G 1 (708 aa).

The 287-residue stretch at 9-295 (AKVRNIGIMA…AVVRYLPTPL (287 aa)) folds into the tr-type G domain. GTP-binding positions include 18-25 (AHIDAGKT), 86-90 (DTPGH), and 140-143 (NKLD).

It belongs to the TRAFAC class translation factor GTPase superfamily. Classic translation factor GTPase family. EF-G/EF-2 subfamily.

Its subcellular location is the cytoplasm. Functionally, catalyzes the GTP-dependent ribosomal translocation step during translation elongation. During this step, the ribosome changes from the pre-translocational (PRE) to the post-translocational (POST) state as the newly formed A-site-bound peptidyl-tRNA and P-site-bound deacylated tRNA move to the P and E sites, respectively. Catalyzes the coordinated movement of the two tRNA molecules, the mRNA and conformational changes in the ribosome. This is Elongation factor G 1 (fusA) from Streptomyces coelicolor (strain ATCC BAA-471 / A3(2) / M145).